Reading from the N-terminus, the 120-residue chain is Seripauperin-10 (120 aa).

The first 20 residues, 1-20 (MVKLTSIAAGVAAIAATASA), serve as a signal peptide directing secretion.

Belongs to the SRP1/TIP1 family. Seripauperin subfamily.

The polypeptide is Seripauperin-10 (PAU10) (Saccharomyces cerevisiae (strain ATCC 204508 / S288c) (Baker's yeast)).